A 106-amino-acid chain; its full sequence is UPF0145 protein (106 aa).

Belongs to the UPF0145 family.

This Listeria grayi (Listeria murrayi) protein is UPF0145 protein.